A 435-amino-acid polypeptide reads, in one-letter code: Antho-RFamide neuropeptides type 1 (435 aa).

The signal sequence occupies residues 1-22 (MTTVSYVTILLTVLVQVLTSDA). Residues 23–193 (KATNNKRELS…SVPGRYGREL (171 aa)) constitute a propeptide that is removed on maturation. Q194 bears the Pyrrolidone carboxylic acid mark. Phenylalanine amide is present on F197. The propeptide occupies 199–201 (REL). At F205 the chain carries Phenylalanine amide. The propeptide occupies 207–209 (REA). Position 213 is a phenylalanine amide (F213). Residues 215-217 (REL) constitute a propeptide that is removed on maturation. At F221 the chain carries Phenylalanine amide. Positions 223–225 (REF) are excised as a propeptide. F229 carries the phenylalanine amide modification. Positions 230–371 (GREDQGRFGR…EDIAEADQGR (142 aa)) are enriched in basic and acidic residues. 2 disordered regions span residues 230–374 (GRED…RFGR) and 386–435 (AKKR…AKTS). A propeptide spanning residues 231 to 233 (RED) is cleaved from the precursor. F237 is subject to Phenylalanine amide. Positions 239–241 (RED) are excised as a propeptide. The residue at position 245 (F245) is a Phenylalanine amide. Positions 247–249 (RED) are excised as a propeptide. F253 carries the phenylalanine amide modification. The propeptide occupies 255–257 (RED). At F261 the chain carries Phenylalanine amide. Residues 263-265 (RED) constitute a propeptide that is removed on maturation. Phenylalanine amide is present on F269. Residues 271–273 (RED) constitute a propeptide that is removed on maturation. F277 carries the phenylalanine amide modification. The propeptide occupies 279–281 (REL). Position 285 is a phenylalanine amide (F285). Residues 287 to 289 (REF) constitute a propeptide that is removed on maturation. Position 293 is a phenylalanine amide (F293). Positions 295–297 (RED) are excised as a propeptide. F301 carries the post-translational modification Phenylalanine amide. Positions 303–305 (RED) are excised as a propeptide. F309 is subject to Phenylalanine amide. A propeptide spanning residues 311–313 (REL) is cleaved from the precursor. F317 carries the phenylalanine amide modification. Residues 319-321 (RED) constitute a propeptide that is removed on maturation. F325 bears the Phenylalanine amide mark. Positions 327 to 329 (RED) are excised as a propeptide. F333 bears the Phenylalanine amide mark. Residues 335–342 (REDLAKED) constitute a propeptide that is removed on maturation. F346 bears the Phenylalanine amide mark. Residues 348 to 355 (REDLAKED) constitute a propeptide that is removed on maturation. The residue at position 359 (F359) is a Phenylalanine amide. Positions 361-368 (REDIAEAD) are excised as a propeptide. F372 carries the phenylalanine amide modification. A propeptide spanning residues 374–435 (RNAAAAAAAA…KSDDALAKTS (62 aa)) is cleaved from the precursor. The span at 398-435 (SDPKPQTRFRDGKDMQEKRKVEKKDKIEKSDDALAKTS) shows a compositional bias: basic and acidic residues.

It belongs to the FARP (FMRFamide related peptide) family.

The protein localises to the secreted. Functionally, not known but it could act as a transmitter at neuromuscular synapses. The protein is Antho-RFamide neuropeptides type 1 of Anthopleura elegantissima (Green aggregating anemone).